A 371-amino-acid chain; its full sequence is tRNA-specific 2-thiouridylase MnmA (371 aa).

Residues 22 to 29 (GLSGGVDS) and M48 each bind ATP. The segment at 108 to 110 (NPD) is interaction with target base in tRNA. Residue C113 is the Nucleophile of the active site. A disulfide bond links C113 and C209. G137 lines the ATP pocket. An interaction with tRNA region spans residues 159-161 (KDQ). The active-site Cysteine persulfide intermediate is C209.

Belongs to the MnmA/TRMU family.

The protein localises to the cytoplasm. The catalysed reaction is S-sulfanyl-L-cysteinyl-[protein] + uridine(34) in tRNA + AH2 + ATP = 2-thiouridine(34) in tRNA + L-cysteinyl-[protein] + A + AMP + diphosphate + H(+). Catalyzes the 2-thiolation of uridine at the wobble position (U34) of tRNA, leading to the formation of s(2)U34. The chain is tRNA-specific 2-thiouridylase MnmA from Coxiella burnetii (strain CbuG_Q212) (Coxiella burnetii (strain Q212)).